The following is a 156-amino-acid chain: Small ribosomal subunit protein uS7 (156 aa).

The protein belongs to the universal ribosomal protein uS7 family. As to quaternary structure, part of the 30S ribosomal subunit. Contacts proteins S9 and S11.

Functionally, one of the primary rRNA binding proteins, it binds directly to 16S rRNA where it nucleates assembly of the head domain of the 30S subunit. Is located at the subunit interface close to the decoding center, probably blocks exit of the E-site tRNA. The chain is Small ribosomal subunit protein uS7 from Pseudomonas aeruginosa (strain LESB58).